The chain runs to 415 residues: Probable N-acetyl-gamma-glutamyl-phosphate reductase, chloroplastic (415 aa).

The transit peptide at 1 to 74 (MGSTALGGGA…SGVKSGEEVR (74 aa)) directs the protein to the chloroplast. Positions 48–68 (VRASVASSPQKQHSPKTSGVK) are disordered. Polar residues predominate over residues 56–67 (PQKQHSPKTSGV). The active site involves Cys-219.

Belongs to the NAGSA dehydrogenase family. Type 1 subfamily. Homotetramer.

The protein resides in the plastid. The protein localises to the chloroplast. It carries out the reaction N-acetyl-L-glutamate 5-semialdehyde + phosphate + NADP(+) = N-acetyl-L-glutamyl 5-phosphate + NADPH + H(+). Its pathway is amino-acid biosynthesis; L-arginine biosynthesis; N(2)-acetyl-L-ornithine from L-glutamate: step 3/4. This Oryza sativa subsp. japonica (Rice) protein is Probable N-acetyl-gamma-glutamyl-phosphate reductase, chloroplastic.